A 422-amino-acid polypeptide reads, in one-letter code: Protein phosphatase 1 regulatory subunit 36 (422 aa).

As to quaternary structure, interacts with PPP1CA.

Its function is as follows. Inhibits phosphatase activity of protein phosphatase 1 (PP1) complexes. This chain is Protein phosphatase 1 regulatory subunit 36 (PPP1R36), found in Homo sapiens (Human).